We begin with the raw amino-acid sequence, 33 residues long: Neutrophil defensin 3 (33 aa).

Cystine bridges form between C3–C31, C5–C20, and C10–C30.

It belongs to the alpha-defensin family.

The protein localises to the secreted. In terms of biological role, anti-fungal and bactericidal activity, greater against Gram-positive bacteria. The polypeptide is Neutrophil defensin 3 (Mesocricetus auratus (Golden hamster)).